Consider the following 143-residue polypeptide: Transcriptional regulator MraZ (143 aa).

2 consecutive SpoVT-AbrB domains span residues 5–47 and 76–119; these read EYQH…PMSE and ATEC…SKEI.

It belongs to the MraZ family. Forms oligomers.

Its subcellular location is the cytoplasm. It localises to the nucleoid. In Bacillus licheniformis (strain ATCC 14580 / DSM 13 / JCM 2505 / CCUG 7422 / NBRC 12200 / NCIMB 9375 / NCTC 10341 / NRRL NRS-1264 / Gibson 46), this protein is Transcriptional regulator MraZ.